Here is a 498-residue protein sequence, read N- to C-terminus: Probable cytosol aminopeptidase (498 aa).

Mn(2+)-binding residues include lysine 264 and aspartate 269. Lysine 276 is a catalytic residue. 3 residues coordinate Mn(2+): aspartate 287, aspartate 346, and glutamate 348. Arginine 350 is an active-site residue.

It belongs to the peptidase M17 family. It depends on Mn(2+) as a cofactor.

It is found in the cytoplasm. The catalysed reaction is Release of an N-terminal amino acid, Xaa-|-Yaa-, in which Xaa is preferably Leu, but may be other amino acids including Pro although not Arg or Lys, and Yaa may be Pro. Amino acid amides and methyl esters are also readily hydrolyzed, but rates on arylamides are exceedingly low.. The enzyme catalyses Release of an N-terminal amino acid, preferentially leucine, but not glutamic or aspartic acids.. Its function is as follows. Presumably involved in the processing and regular turnover of intracellular proteins. Catalyzes the removal of unsubstituted N-terminal amino acids from various peptides. The protein is Probable cytosol aminopeptidase of Xanthobacter autotrophicus (strain ATCC BAA-1158 / Py2).